The chain runs to 345 residues: S-adenosylmethionine:tRNA ribosyltransferase-isomerase (345 aa).

This sequence belongs to the QueA family. In terms of assembly, monomer.

The protein resides in the cytoplasm. The enzyme catalyses 7-aminomethyl-7-carbaguanosine(34) in tRNA + S-adenosyl-L-methionine = epoxyqueuosine(34) in tRNA + adenine + L-methionine + 2 H(+). It participates in tRNA modification; tRNA-queuosine biosynthesis. In terms of biological role, transfers and isomerizes the ribose moiety from AdoMet to the 7-aminomethyl group of 7-deazaguanine (preQ1-tRNA) to give epoxyqueuosine (oQ-tRNA). The polypeptide is S-adenosylmethionine:tRNA ribosyltransferase-isomerase (Aromatoleum aromaticum (strain DSM 19018 / LMG 30748 / EbN1) (Azoarcus sp. (strain EbN1))).